Here is a 365-residue protein sequence, read N- to C-terminus: Heat-inducible transcription repressor HrcA (365 aa).

It belongs to the HrcA family.

Its function is as follows. Negative regulator of class I heat shock genes (grpE-dnaK-dnaJ and groELS operons). Prevents heat-shock induction of these operons. The sequence is that of Heat-inducible transcription repressor HrcA from Nodularia spumigena.